Consider the following 365-residue polypeptide: Succinate--CoA ligase [ADP-forming] subunit beta (365 aa).

The region spanning 9 to 230 (KEIFRAEGIS…EMEEYEPEEF (222 aa)) is the ATP-grasp domain. ATP contacts are provided by residues Lys45, 52-54 (GRG), Glu90, Ile93, and Glu98. Positions 190 and 203 each coordinate Mg(2+). Substrate is bound by residues Asn244 and 300–302 (GIT).

Belongs to the succinate/malate CoA ligase beta subunit family. Heterotetramer of two alpha and two beta subunits. It depends on Mg(2+) as a cofactor.

The enzyme catalyses succinate + ATP + CoA = succinyl-CoA + ADP + phosphate. It carries out the reaction GTP + succinate + CoA = succinyl-CoA + GDP + phosphate. It functions in the pathway carbohydrate metabolism; tricarboxylic acid cycle; succinate from succinyl-CoA (ligase route): step 1/1. Its function is as follows. Succinyl-CoA synthetase functions in the citric acid cycle (TCA), coupling the hydrolysis of succinyl-CoA to the synthesis of either ATP or GTP and thus represents the only step of substrate-level phosphorylation in the TCA. The beta subunit provides nucleotide specificity of the enzyme and binds the substrate succinate, while the binding sites for coenzyme A and phosphate are found in the alpha subunit. The polypeptide is Succinate--CoA ligase [ADP-forming] subunit beta (Methanothermobacter thermautotrophicus (strain ATCC 29096 / DSM 1053 / JCM 10044 / NBRC 100330 / Delta H) (Methanobacterium thermoautotrophicum)).